A 176-amino-acid polypeptide reads, in one-letter code: Cytochrome b (176 aa).

The next 3 helical transmembrane spans lie at 33 to 53 (FGSL…FLAM), 77 to 98 (WLLR…YLHV), and 113 to 133 (WNVG…GYVL). Heme b contacts are provided by His-83 and His-97.

The protein belongs to the cytochrome b family. The cytochrome bc1 complex contains 11 subunits: 3 respiratory subunits (MT-CYB, CYC1 and UQCRFS1), 2 core proteins (UQCRC1 and UQCRC2) and 6 low-molecular weight proteins (UQCRH/QCR6, UQCRB/QCR7, UQCRQ/QCR8, UQCR10/QCR9, UQCR11/QCR10 and a cleavage product of UQCRFS1). This cytochrome bc1 complex then forms a dimer. The cofactor is heme b.

It localises to the mitochondrion inner membrane. Component of the ubiquinol-cytochrome c reductase complex (complex III or cytochrome b-c1 complex) that is part of the mitochondrial respiratory chain. The b-c1 complex mediates electron transfer from ubiquinol to cytochrome c. Contributes to the generation of a proton gradient across the mitochondrial membrane that is then used for ATP synthesis. This is Cytochrome b (MT-CYB) from Mormopterus kalinowskii (Kalinowski's mastiff bat).